Reading from the N-terminus, the 35-residue chain is Tamulustoxin-2 (35 aa).

Cystine bridges form between cysteine 2–cysteine 22, cysteine 7–cysteine 31, and cysteine 11–cysteine 33.

The protein belongs to the short scorpion toxin superfamily. Potassium channel inhibitor family. As to expression, expressed by the venom gland.

The protein resides in the secreted. In terms of biological role, blocks Kv1.6/KCNA6 potassium channels. The chain is Tamulustoxin-2 from Hottentotta tamulus (Eastern Indian scorpion).